Consider the following 279-residue polypeptide: Protein NipSnap homolog 1 (279 aa).

It belongs to the NipSnap family.

It localises to the mitochondrion matrix. Functionally, protein involved in mitophagy. Accumulates on the mitochondria surface in response to mitochondrial depolarization and acts as a 'eat me' signal by recruiting proteins involved in selective autophagy. This Danio rerio (Zebrafish) protein is Protein NipSnap homolog 1.